Here is a 622-residue protein sequence, read N- to C-terminus: Chaperone protein HscA homolog (622 aa).

This sequence belongs to the heat shock protein 70 family.

In terms of biological role, chaperone involved in the maturation of iron-sulfur cluster-containing proteins. Has a low intrinsic ATPase activity which is markedly stimulated by HscB. The protein is Chaperone protein HscA homolog of Azoarcus sp. (strain BH72).